The chain runs to 140 residues: Histone H2B (140 aa).

Residues 1 to 10 are compositionally biased toward basic and acidic residues; sequence MPPKAAEKKP. The segment at 1–48 is disordered; that stretch reads MPPKAAEKKPSTGGKAPAGKAPAEKKEAGKKTAAAATGDKKKRGKTRK. Lysine 8 and lysine 9 each carry N6-acetyllysine; alternate. Glycyl lysine isopeptide (Lys-Gly) (interchain with G-Cter in SUMO); alternate cross-links involve residues lysine 8 and lysine 9. A compositionally biased stretch (low complexity) spans 11-21; the sequence is STGGKAPAGKA. Lysine 15 is modified (N6-acetyllysine). Lysine 25 is subject to N6-acetyllysine; alternate. A Glycyl lysine isopeptide (Lys-Gly) (interchain with G-Cter in SUMO); alternate cross-link involves residue lysine 25. Lysine 26 participates in a covalent cross-link: Glycyl lysine isopeptide (Lys-Gly) (interchain with G-Cter in SUMO). Lysine 134 is covalently cross-linked (Glycyl lysine isopeptide (Lys-Gly) (interchain with G-Cter in ubiquitin)).

It belongs to the histone H2B family. In terms of assembly, the nucleosome is a histone octamer containing two molecules each of H2A, H2B, H3 and H4 assembled in one H3-H4 heterotetramer and two H2A-H2B heterodimers. The octamer wraps approximately 147 bp of DNA. Post-translationally, monoubiquitinated by the ubc2-bre1 complex to form H2BK123ub1. H2BK123ub1 gives a specific tag for epigenetic transcriptional activation and is also prerequisite for H3K4me and H3K79me formation. H2BK123ub1 also modulates the formation of double-strand breaks during meiosis and is a prerequisite for DNA-damage checkpoint activation. Acetylated by gcn5 to form H2BK11ac and H2BK16ac. H2BK16ac can also be formed by esa1. Acetylation of N-terminal lysines and particularly formation of H2BK11acK16ac has a positive effect on transcription. In terms of processing, sumoylation to form H2BK6su or H2BK7su, and probably also H2BK16su or H2BK17su, occurs preferentially near the telomeres and represses gene transcription.

The protein localises to the nucleus. It localises to the chromosome. Functionally, core component of nucleosome. Nucleosomes wrap and compact DNA into chromatin, limiting DNA accessibility to the cellular machineries which require DNA as a template. Histones thereby play a central role in transcription regulation, DNA repair, DNA replication and chromosomal stability. DNA accessibility is regulated via a complex set of post-translational modifications of histones, also called histone code, and nucleosome remodeling. In Neosartorya fischeri (strain ATCC 1020 / DSM 3700 / CBS 544.65 / FGSC A1164 / JCM 1740 / NRRL 181 / WB 181) (Aspergillus fischerianus), this protein is Histone H2B (htb1).